Consider the following 286-residue polypeptide: Energy-coupling factor transporter ATP-binding protein EcfA2 (286 aa).

Residues 3-246 (IQFNQVSYIY…KTQLLKWHIE (244 aa)) form the ABC transporter domain. 40–47 (GQTGSGKS) is an ATP binding site.

It belongs to the ABC transporter superfamily. Energy-coupling factor EcfA family. In terms of assembly, forms a stable energy-coupling factor (ECF) transporter complex composed of 2 membrane-embedded substrate-binding proteins (S component), 2 ATP-binding proteins (A component) and 2 transmembrane proteins (T component).

The protein localises to the cell membrane. ATP-binding (A) component of a common energy-coupling factor (ECF) ABC-transporter complex. Unlike classic ABC transporters this ECF transporter provides the energy necessary to transport a number of different substrates. This is Energy-coupling factor transporter ATP-binding protein EcfA2 from Staphylococcus epidermidis (strain ATCC 35984 / DSM 28319 / BCRC 17069 / CCUG 31568 / BM 3577 / RP62A).